We begin with the raw amino-acid sequence, 220 residues long: Glutathione S-transferase U26 (220 aa).

Positions 4-83 (DQVILLDYWP…YIDEVWSDAS (80 aa)) constitute a GST N-terminal domain. Glutathione is bound by residues 14-15 (SM), 40-41 (VK), 54-55 (KI), and 67-68 (ES). The 122-residue stretch at 89–210 (DPYQKSRARF…ADSDRIIEYV (122 aa)) folds into the GST C-terminal domain.

The protein belongs to the GST superfamily. Tau family.

It localises to the cytoplasm. Its subcellular location is the cytosol. It carries out the reaction RX + glutathione = an S-substituted glutathione + a halide anion + H(+). Functionally, in vitro, possesses glutathione S-transferase activity toward 1-chloro-2,4-dinitrobenzene (CDNB). May be involved in the conjugation of reduced glutathione to a wide number of exogenous and endogenous hydrophobic electrophiles and have a detoxification role against certain herbicides. This Arabidopsis thaliana (Mouse-ear cress) protein is Glutathione S-transferase U26 (GSTU26).